The chain runs to 958 residues: MutS protein homolog 4 (958 aa).

Disordered regions lie at residues 51-110 (QEAA…SFGN) and 124-161 (PVGT…WTPQ). The segment covering 91–107 (SSSSSSSPAPASAPGSS) has biased composition (low complexity). Composition is skewed to polar residues over residues 124 to 138 (PVGT…TTYP) and 146 to 161 (SAGN…WTPQ). 702–709 (GPNMSGKS) lines the ATP pocket.

Belongs to the DNA mismatch repair MutS family. Heterooligomer of MSH4 and MSH5. As to expression, predominantly expressed in testis.

It is found in the chromosome. Involved in meiotic recombination. Required for reciprocal recombination and proper segregation of homologous chromosomes at meiosis. In Mus musculus (Mouse), this protein is MutS protein homolog 4 (Msh4).